The primary structure comprises 191 residues: CASP-like protein 2U4 (191 aa).

The Cytoplasmic segment spans residues 1-25; the sequence is MGAYDGAEAPRAAPASTAANSRPSR. A helical transmembrane segment spans residues 26-46; the sequence is LLLLHSLLLRLVAVVLSILVI. The Extracellular portion of the chain corresponds to 47–68; the sequence is AVMVHAKQRVMIFKAEWDNSKA. The chain crosses the membrane as a helical span at residues 69–89; sequence FVALVTISAICLGYSFLQFIL. Residues 90 to 114 lie on the Cytoplasmic side of the membrane; the sequence is SAFHLCSKSWKSPTKCWAWMNFIAD. The helical transmembrane segment at 115–135 threads the bilayer; that stretch reads QILTYAMLGAAAAAAELAYIA. At 136–157 the chain is on the extracellular side; it reads KNGSSRAQWQPICSTFNTFCTR. A glycan (N-linked (GlcNAc...) asparagine) is linked at asparagine 137. A helical membrane pass occupies residues 158–178; it reads AGASIILSFIAVLALANSSAI. Residues 179 to 191 lie on the Cytoplasmic side of the membrane; the sequence is SAYHLFRRPSSSV.

The protein belongs to the Casparian strip membrane proteins (CASP) family. As to quaternary structure, homodimer and heterodimers.

Its subcellular location is the cell membrane. This chain is CASP-like protein 2U4, found in Selaginella moellendorffii (Spikemoss).